The following is a 289-amino-acid chain: uncharacterized protein (289 aa).

Positions M1–T58 constitute an HTH lysR-type domain. The H-T-H motif DNA-binding region spans V18–K37.

This sequence belongs to the LysR transcriptional regulatory family.

This is an uncharacterized protein from Bacillus subtilis (strain 168).